The following is a 576-amino-acid chain: Type II restriction enzyme BsuRI (576 aa).

Monomer. Mg(2+) is required as a cofactor.

It catalyses the reaction Endonucleolytic cleavage of DNA to give specific double-stranded fragments with terminal 5'-phosphates.. Its function is as follows. A P subtype restriction enzyme that recognizes the double-stranded sequence 5'-GGCC-3' and cleaves after G-2. This is Type II restriction enzyme BsuRI (hsdRR) from Bacillus subtilis.